A 564-amino-acid chain; its full sequence is Dihydropyrimidinase-related protein 5 (564 aa).

A phosphothreonine mark is found at threonine 509 and threonine 514. Phosphoserine is present on residues serine 532 and serine 538. Arginine 559 bears the Omega-N-methylarginine mark.

This sequence belongs to the metallo-dependent hydrolases superfamily. Hydantoinase/dihydropyrimidinase family. As to quaternary structure, homotetramer, and heterotetramer with other DPYS-like proteins. Interacts with DPYSL2, DPYSL3 and DPYSL4. Interacts with MAP2 and TUBB3.

It localises to the cytoplasm. Functionally, involved in the negative regulation of dendrite outgrowth. The polypeptide is Dihydropyrimidinase-related protein 5 (DPYSL5) (Homo sapiens (Human)).